The sequence spans 646 residues: Sulfate transporter 3.2 (646 aa).

Residues 1–76 (MSSKRASQYH…GYSLEYLKSD (76 aa)) lie on the Cytoplasmic side of the membrane. The helical transmembrane segment at 77-97 (VISGITIASLAIPQGISYAQL) threads the bilayer. The Extracellular segment spans residues 98–99 (AN). A helical membrane pass occupies residues 100-120 (LPPILGLYSSLVPPLVYAIMG). Over 121–124 (SSRD) the chain is Cytoplasmic. A helical transmembrane segment spans residues 125–145 (LAVGTVAVASLLTAAMLGKEV). The Extracellular portion of the chain corresponds to 146–154 (NAVVNPKLY). Residues 155-175 (LHLAFTATFFAGLMQTCLGLL) traverse the membrane as a helical segment. Arginine 176 is a topological domain (cytoplasmic). Residues 177 to 197 (LGFVVEILSHAAIVGFMGGAA) traverse the membrane as a helical segment. The Extracellular portion of the chain corresponds to 198 to 235 (TVVCLQQLKGLLGLHHFTHSTDIVTVLRSIFSQSHMWR). The chain crosses the membrane as a helical span at residues 236 to 256 (WESGVLGCCFLIFLLTTKYIS). The Cytoplasmic portion of the chain corresponds to 257–262 (KKRPKL). A helical membrane pass occupies residues 263-283 (FWISAMSPLVSVIFGTIFLYF). Over 284 to 315 (LHDQFHGIQFIGELKKGINPPSITHLVFTPPY) the chain is Extracellular. Residues 316 to 336 (VMLALKVGIITGVIALAEGIA) traverse the membrane as a helical segment. The Cytoplasmic portion of the chain corresponds to 337–354 (VGRSFAMYKNYNIDGNKE). The chain crosses the membrane as a helical span at residues 355 to 375 (MIAFGMMNILGSFSSCYLTTG). The Extracellular segment spans residues 376–390 (PFSRSAVNYNAGCKT). A run of 2 helical transmembrane segments spans residues 391-411 (ALSN…LTPL) and 412-432 (FFYT…LGLV). At 433-447 (DYEAAIHLWKLDKFD) the chain is on the extracellular side. The chain crosses the membrane as a helical span at residues 448 to 468 (FFVCLSAYLGVVFGTIEIGLI). Residues 469 to 646 (LSVGISVMRL…DSPVPEFNNV (178 aa)) are Cytoplasmic-facing. In terms of domain architecture, STAS spans 504–627 (HYPQAITRSS…LTVAEAVAAC (124 aa)).

This sequence belongs to the SLC26A/SulP transporter (TC 2.A.53) family. As to expression, expressed only in leaves.

The protein resides in the membrane. Its function is as follows. H(+)/sulfate cotransporter that may play a role in the regulation of sulfate assimilation. This chain is Sulfate transporter 3.2 (SULTR3;2), found in Arabidopsis thaliana (Mouse-ear cress).